Here is a 98-residue protein sequence, read N- to C-terminus: UPF0235 protein CCNA_03737 (98 aa).

It belongs to the UPF0235 family.

This chain is UPF0235 protein CCNA_03737, found in Caulobacter vibrioides (strain NA1000 / CB15N) (Caulobacter crescentus).